An 85-amino-acid chain; its full sequence is MQRNSRRVLIGKVVSDKMDKTITVLVETYKNHPIYKKRVKYSKKYKAHDENQVAQMGDKVEIMETRPLSKTKNFRLVRVIEKATL.

It belongs to the universal ribosomal protein uS17 family. Part of the 30S ribosomal subunit.

Its function is as follows. One of the primary rRNA binding proteins, it binds specifically to the 5'-end of 16S ribosomal RNA. The protein is Small ribosomal subunit protein uS17 of Mycoplasma capricolum subsp. capricolum (strain California kid / ATCC 27343 / NCTC 10154).